We begin with the raw amino-acid sequence, 86 residues long: Neurotoxin 3FTx-LT (86 aa).

The N-terminal stretch at 1-21 (MKTLLLTLVVVTIVCLDLGYT) is a signal peptide. Intrachain disulfides connect cysteine 24–cysteine 45, cysteine 27–cysteine 32, cysteine 38–cysteine 63, cysteine 67–cysteine 78, and cysteine 79–cysteine 84.

As to expression, expressed by the venom gland.

The protein localises to the secreted. In terms of biological role, binds with low affinity to muscular (alpha-1-beta-1-delta-epsilon/CHRNA1-CHRNB1-CHRND-CHRNE) and very low affinity to neuronal (alpha-7/CHRNA7) nicotinic acetylcholine receptor (nAChR). This Bungarus fasciatus (Banded krait) protein is Neurotoxin 3FTx-LT.